A 353-amino-acid chain; its full sequence is 41 kDa protein (353 aa).

Positions 132–197 are disordered; it reads QSSHASALEQ…DNNSSDTIKD (66 aa). A compositionally biased stretch (basic and acidic residues) spans 157–169; sequence LDNKGKSDSENCN.

The chain is 41 kDa protein from Lactobacillus helveticus (Lactobacillus suntoryeus).